Here is a 247-residue protein sequence, read N- to C-terminus: MLLEYIDEVYKSVEKIKATQIKNIQEAATLIANSLLKEEDSVFHVFGCGHSHMAAEELFYRAGGLACVNPILPSELMLHEGALKSSYYERNEDIIKLIFDRYDLRQEECIIIVSHSGRNGAPIEAAVEAKRRGLKVVAITSKEYKQKTFSRHSSGKFLEDIADIVIDNCGQYGDAALKIKKDTLEISFSPLSTVLNTVILNMIEAEIVFIMIKKNLVPPVFLSGNIEGAEEHNLKLIEKYKKRVKHL.

Residues I31–K213 form the SIS domain.

The protein belongs to the UPF0309 family.

The chain is UPF0309 protein Teth39_1980 from Thermoanaerobacter pseudethanolicus (strain ATCC 33223 / 39E) (Clostridium thermohydrosulfuricum).